The chain runs to 463 residues: Fumarate hydratase class II (463 aa).

Residues 98–100, 129–132, 139–141, and Thr-187 contribute to the substrate site; these read SGT, HPND, and SSN. His-188 functions as the Proton donor/acceptor in the catalytic mechanism. Ser-318 is a catalytic residue. Substrate-binding positions include Ser-319 and 324–326; that span reads KVN.

Belongs to the class-II fumarase/aspartase family. Fumarase subfamily. In terms of assembly, homotetramer.

The protein localises to the cytoplasm. It carries out the reaction (S)-malate = fumarate + H2O. The protein operates within carbohydrate metabolism; tricarboxylic acid cycle; (S)-malate from fumarate: step 1/1. In terms of biological role, involved in the TCA cycle. Catalyzes the stereospecific interconversion of fumarate to L-malate. In Brucella melitensis biotype 1 (strain ATCC 23456 / CCUG 17765 / NCTC 10094 / 16M), this protein is Fumarate hydratase class II.